Reading from the N-terminus, the 184-residue chain is Endoribonuclease YbeY (184 aa).

The Zn(2+) site is built by histidine 118, histidine 122, and histidine 128.

This sequence belongs to the endoribonuclease YbeY family. The cofactor is Zn(2+).

The protein localises to the cytoplasm. Functionally, single strand-specific metallo-endoribonuclease involved in late-stage 70S ribosome quality control and in maturation of the 3' terminus of the 16S rRNA. The chain is Endoribonuclease YbeY from Nocardia farcinica (strain IFM 10152).